A 423-amino-acid polypeptide reads, in one-letter code: 4-hydroxy-3-methylbut-2-en-1-yl diphosphate synthase (flavodoxin) (423 aa).

[4Fe-4S] cluster contacts are provided by cysteine 307, cysteine 310, cysteine 353, and glutamate 360.

It belongs to the IspG family. [4Fe-4S] cluster serves as cofactor.

It carries out the reaction (2E)-4-hydroxy-3-methylbut-2-enyl diphosphate + oxidized [flavodoxin] + H2O + 2 H(+) = 2-C-methyl-D-erythritol 2,4-cyclic diphosphate + reduced [flavodoxin]. The protein operates within isoprenoid biosynthesis; isopentenyl diphosphate biosynthesis via DXP pathway; isopentenyl diphosphate from 1-deoxy-D-xylulose 5-phosphate: step 5/6. Its function is as follows. Converts 2C-methyl-D-erythritol 2,4-cyclodiphosphate (ME-2,4cPP) into 1-hydroxy-2-methyl-2-(E)-butenyl 4-diphosphate. The chain is 4-hydroxy-3-methylbut-2-en-1-yl diphosphate synthase (flavodoxin) from Brucella anthropi (strain ATCC 49188 / DSM 6882 / CCUG 24695 / JCM 21032 / LMG 3331 / NBRC 15819 / NCTC 12168 / Alc 37) (Ochrobactrum anthropi).